Reading from the N-terminus, the 321-residue chain is Ferrochelatase (321 aa).

2 residues coordinate Fe cation: histidine 194 and glutamate 275.

It belongs to the ferrochelatase family.

It is found in the cytoplasm. The enzyme catalyses heme b + 2 H(+) = protoporphyrin IX + Fe(2+). It functions in the pathway porphyrin-containing compound metabolism; protoheme biosynthesis; protoheme from protoporphyrin-IX: step 1/1. Catalyzes the ferrous insertion into protoporphyrin IX. The chain is Ferrochelatase from Wigglesworthia glossinidia brevipalpis.